Here is a 491-residue protein sequence, read N- to C-terminus: Ketol-acid reductoisomerase (NADP(+)) (491 aa).

The KARI N-terminal Rossmann domain maps to 15 to 208; that stretch reads AQLGKCRFMG…GGHRAGVLES (194 aa). NADP(+) contacts are provided by residues 45 to 48, Arg-68, Arg-76, Ser-78, and 108 to 110; these read CGAQ and DKQ. The active site involves His-132. Gly-158 contacts NADP(+). KARI C-terminal knotted domains lie at 209-344 and 345-484; these read SFVA…TAPQ and FEGK…MTDM. Mg(2+) is bound by residues Asp-217, Glu-221, Glu-389, and Glu-393. Ser-414 provides a ligand contact to substrate.

Belongs to the ketol-acid reductoisomerase family. Mg(2+) serves as cofactor.

The catalysed reaction is (2R)-2,3-dihydroxy-3-methylbutanoate + NADP(+) = (2S)-2-acetolactate + NADPH + H(+). It catalyses the reaction (2R,3R)-2,3-dihydroxy-3-methylpentanoate + NADP(+) = (S)-2-ethyl-2-hydroxy-3-oxobutanoate + NADPH + H(+). Its pathway is amino-acid biosynthesis; L-isoleucine biosynthesis; L-isoleucine from 2-oxobutanoate: step 2/4. It functions in the pathway amino-acid biosynthesis; L-valine biosynthesis; L-valine from pyruvate: step 2/4. Its function is as follows. Involved in the biosynthesis of branched-chain amino acids (BCAA). Catalyzes an alkyl-migration followed by a ketol-acid reduction of (S)-2-acetolactate (S2AL) to yield (R)-2,3-dihydroxy-isovalerate. In the isomerase reaction, S2AL is rearranged via a Mg-dependent methyl migration to produce 3-hydroxy-3-methyl-2-ketobutyrate (HMKB). In the reductase reaction, this 2-ketoacid undergoes a metal-dependent reduction by NADPH to yield (R)-2,3-dihydroxy-isovalerate. The protein is Ketol-acid reductoisomerase (NADP(+)) of Salmonella dublin (strain CT_02021853).